Reading from the N-terminus, the 92-residue chain is Small ribosomal subunit protein uS19c (92 aa).

It belongs to the universal ribosomal protein uS19 family.

Its subcellular location is the plastid. It localises to the chloroplast. Functionally, protein S19 forms a complex with S13 that binds strongly to the 16S ribosomal RNA. This is Small ribosomal subunit protein uS19c from Nasturtium officinale (Watercress).